A 162-amino-acid polypeptide reads, in one-letter code: Non-specific lipid transfer protein GPI-anchored 27 (162 aa).

Positions 1 to 29 are cleaved as a signal peptide; it reads MAYTNKVAVAVGAAVVFLAVVMNPRWTEA. Disulfide bonds link cysteine 39–cysteine 78, cysteine 50–cysteine 62, cysteine 63–cysteine 102, and cysteine 76–cysteine 110. An N-linked (GlcNAc...) asparagine glycan is attached at asparagine 68. N-linked (GlcNAc...) asparagine glycans are attached at residues asparagine 124 and asparagine 135. A lipid anchor (GPI-anchor amidated serine) is attached at serine 137. A propeptide spans 138 to 162 (removed in mature form); that stretch reads VGGKNKVATSMSAFGLVAILLFVMF.

Belongs to the plant LTP family.

It is found in the cell membrane. Probable lipid transfer protein. The protein is Non-specific lipid transfer protein GPI-anchored 27 of Arabidopsis thaliana (Mouse-ear cress).